Consider the following 183-residue polypeptide: Early E3 20.2 kDa glycoprotein (183 aa).

5 N-linked (GlcNAc...) asparagine; by host glycosylation sites follow: Asn30, Asn73, Asn117, Asn134, and Asn135.

The protein belongs to the adenoviridae E3_20 family.

The sequence is that of Early E3 20.2 kDa glycoprotein from Homo sapiens (Human).